The sequence spans 406 residues: Lymphocyte transmembrane adapter 1 (406 aa).

The disordered stretch occupies residues 1-25 (MYTTPAPPEITRRSSEPSTQQGTLG). Over 1-33 (MYTTPAPPEITRRSSEPSTQQGTLGSLEGEKGH) the chain is Extracellular. Residues 34–54 (LLFPGFVVLVTIFLVVIVTCI) traverse the membrane as a helical; Signal-anchor for type III membrane protein segment. The Cytoplasmic portion of the chain corresponds to 55-406 (LWSRKKQKKR…LATETSGEEV (352 aa)). The disordered stretch occupies residues 109–131 (ESLLSRASDSPEPEVPQASGSLQ). Tyrosine 184 bears the Phosphotyrosine mark. The interval 219 to 258 (AEGGHAGCGKATDRTGVWAPGLQGSNSLSEGDDSSQSSND) is disordered. Over residues 242–258 (GSNSLSEGDDSSQSSND) the composition is skewed to low complexity. 3 positions are modified to phosphotyrosine: tyrosine 259, tyrosine 285, and tyrosine 352. A disordered region spans residues 358 to 406 (PELEGKDWKQGPGTWHPSDERTPSDQAGKFCEAVYPAGSLATETSGEEV).

In terms of assembly, when phosphorylated, interacts with GRB2, PIK3R1 and GRAP2. Phosphorylated on tyrosines upon TCR or BCR activation; which leads to the recruitment of GRB2, PIK3R1 and GRAP2.

Its subcellular location is the cell membrane. Its function is as follows. Negatively regulates TCR (T-cell antigen receptor)-mediated signaling in T-cells and BCR (B-cell antigen receptor)-mediated signaling in B-cells. The polypeptide is Lymphocyte transmembrane adapter 1 (Lax1) (Rattus norvegicus (Rat)).